Consider the following 171-residue polypeptide: uncharacterized protein (171 aa).

This sequence belongs to the mimivirus R24/R907 family.

This is an uncharacterized protein from Acanthamoeba polyphaga (Amoeba).